The primary structure comprises 525 residues: D-3-phosphoglycerate dehydrogenase (525 aa).

Residues 148-149 (RI), Asp168, Thr200, 227-229 (CAR), and Asp253 each bind NAD(+). Arg229 is an active-site residue. The active site involves Glu258. The Proton donor role is filled by His276. 276 to 279 (HLGA) is a binding site for NAD(+). Residues 452–524 (LVYIQHQDTT…DIVSVKLIDL (73 aa)) form the ACT domain.

The protein belongs to the D-isomer specific 2-hydroxyacid dehydrogenase family.

The enzyme catalyses (2R)-3-phosphoglycerate + NAD(+) = 3-phosphooxypyruvate + NADH + H(+). It catalyses the reaction (R)-2-hydroxyglutarate + NAD(+) = 2-oxoglutarate + NADH + H(+). The protein operates within amino-acid biosynthesis; L-serine biosynthesis; L-serine from 3-phospho-D-glycerate: step 1/3. With respect to regulation, in bacteria displays feedback inhibition by L-serine. Its function is as follows. Catalyzes the reversible oxidation of 3-phospho-D-glycerate to 3-phosphonooxypyruvate, the first step of the phosphorylated L-serine biosynthesis pathway. Also catalyzes the reversible oxidation of 2-hydroxyglutarate to 2-oxoglutarate. This chain is D-3-phosphoglycerate dehydrogenase (serA), found in Bacillus subtilis (strain 168).